We begin with the raw amino-acid sequence, 505 residues long: Flagellin (505 aa).

It belongs to the bacterial flagellin family.

It is found in the secreted. The protein localises to the bacterial flagellum. Flagellin is the subunit protein which polymerizes to form the filaments of bacterial flagella. The sequence is that of Flagellin (fliC) from Salmonella muenchen.